Consider the following 596-residue polypeptide: DNA mismatch repair protein MutL (596 aa).

The protein belongs to the DNA mismatch repair MutL/HexB family.

In terms of biological role, this protein is involved in the repair of mismatches in DNA. It is required for dam-dependent methyl-directed DNA mismatch repair. May act as a 'molecular matchmaker', a protein that promotes the formation of a stable complex between two or more DNA-binding proteins in an ATP-dependent manner without itself being part of a final effector complex. The chain is DNA mismatch repair protein MutL from Leptospira borgpetersenii serovar Hardjo-bovis (strain JB197).